An 84-amino-acid polypeptide reads, in one-letter code: Large ribosomal subunit protein bL27 (84 aa).

The disordered stretch occupies residues 1–25 (MAHKKAGGSSKNGRDSAGKRLGVKR).

This sequence belongs to the bacterial ribosomal protein bL27 family.

In Syntrophotalea carbinolica (strain DSM 2380 / NBRC 103641 / GraBd1) (Pelobacter carbinolicus), this protein is Large ribosomal subunit protein bL27.